Consider the following 197-residue polypeptide: Fucoxanthin-chlorophyll a-c binding protein F, chloroplastic (197 aa).

Residues Met1 to Met31 constitute a chloroplast transit peptide. The next 3 helical transmembrane spans lie at Ile73–Ile94, Ile114–Met134, and Gly174–Pro196.

This sequence belongs to the fucoxanthin chlorophyll protein family. As to quaternary structure, the LHC complex of chromophytic algae is composed of fucoxanthin, chlorophyll A and C bound non-covalently by fucoxanthin chlorophyll proteins (FCPs). The ratio of the pigments in lhc; fucoxanthin: chlorophyll C: chlorophyll A is (0.6-1): (0.1-0.3): (1).

Its subcellular location is the plastid. The protein localises to the chloroplast thylakoid membrane. The light-harvesting complex (LHC) functions as a light receptor, it captures and delivers excitation energy to photosystems with which it is closely associated. In chromophytic algae, LHC is associated with photosystem II, energy being transferred from fucoxanthin and chlorophyll C to chlorophyll A and the photosynthetic reaction centers where it is used to synthesize ATP and reducing power. The sequence is that of Fucoxanthin-chlorophyll a-c binding protein F, chloroplastic (FCPF) from Phaeodactylum tricornutum (Diatom).